The following is a 305-amino-acid chain: Plant-type L-asparaginase (305 aa).

The active-site Nucleophile is the T175. Substrate contacts are provided by residues 202–205 (RVGD) and 224–227 (TGLG).

The protein belongs to the Ntn-hydrolase family. Heterotetramer of two alpha and two beta chains arranged as a dimer of alpha/beta heterodimers. The uncleaved protein forms homodimers. Autocleaved. Generates the alpha and beta subunits. The N-terminal residue of the beta subunit is thought to be responsible for the nucleophile hydrolase activity.

It carries out the reaction L-asparagine + H2O = L-aspartate + NH4(+). Catalyzes the hydrolysis of L-asparagine into L-aspartate and ammonia. Does not exhibit glutaminase activity. The polypeptide is Plant-type L-asparaginase (Pyrococcus abyssi (strain GE5 / Orsay)).